The following is a 336-amino-acid chain: Formimidoylglutamase (336 aa).

Positions 129, 160, 162, 164, 257, and 259 each coordinate Mn(2+).

Belongs to the arginase family. Requires Mn(2+) as cofactor.

It catalyses the reaction N-formimidoyl-L-glutamate + H2O = formamide + L-glutamate. The protein operates within amino-acid degradation; L-histidine degradation into L-glutamate; L-glutamate from N-formimidoyl-L-glutamate (hydrolase route): step 1/1. Its function is as follows. Catalyzes the conversion of N-formimidoyl-L-glutamate to L-glutamate and formamide. The polypeptide is Formimidoylglutamase (Vibrio vulnificus (strain CMCP6)).